The chain runs to 672 residues: SHC SH2 domain-binding protein 1 (672 aa).

The residue at position 2 (Ala2) is an N-acetylalanine. Ser5 bears the Phosphoserine mark. A Phosphothreonine modification is found at Thr7. Residues Ser31, Ser42, Ser44, Ser47, and Ser273 each carry the phosphoserine modification. PbH1 repeat units follow at residues 428-451 (GADI…LIVH), 452-473 (RGKT…TVRT), 474-496 (SAEF…EIYP), 497-518 (GSQC…LIKD), and 526-548 (IPKI…VLVK). Ser634 carries the phosphoserine modification.

Interacts directly with isoform p52shc of SHC1 via its SH2 domain. Interacts with TRIM71; leading to enhanced SHCBP1 protein stability. Interacts with both members of the centralspindlin complex, KIF23 and RACGAP1.

It localises to the midbody. It is found in the cytoplasm. The protein resides in the cytoskeleton. Its subcellular location is the spindle. Functionally, may play a role in signaling pathways governing cellular proliferation, cell growth and differentiation. May be a component of a novel signaling pathway downstream of Shc. Acts as a positive regulator of FGF signaling in neural progenitor cells. The sequence is that of SHC SH2 domain-binding protein 1 (SHCBP1) from Homo sapiens (Human).